Here is a 365-residue protein sequence, read N- to C-terminus: Parathion hydrolase (365 aa).

The tat-type signal signal peptide spans 1–29 (MQTRRVVLKSAAAAGTLLGGLAGCASVAG). Positions 55, 57, 169, 201, 230, and 301 each coordinate Zn(2+). K169 carries the N6-carboxylysine modification.

The protein belongs to the metallo-dependent hydrolases superfamily. Phosphotriesterase family. As to quaternary structure, homodimer. It depends on Zn(2+) as a cofactor. Predicted to be exported by the Tat system. The position of the signal peptide cleavage has been experimentally proven.

It is found in the cell membrane. The catalysed reaction is An aryl dialkyl phosphate + H2O = dialkyl phosphate + an aryl alcohol.. In terms of biological role, has an unusual substrate specificity for synthetic organophosphate triesters and phosphorofluoridates. All of the phosphate triesters found to be substrates are synthetic compounds. The identity of any naturally occurring substrate for the enzyme is unknown. Has no detectable activity with phosphate monoesters or diesters and no activity as an esterase or protease. It catalyzes the hydrolysis of the insecticide paraoxon at a rate approaching the diffusion limit and thus appears to be optimally evolved for utilizing this synthetic substrate. This is Parathion hydrolase (opd) from Brevundimonas diminuta (Pseudomonas diminuta).